A 226-amino-acid polypeptide reads, in one-letter code: Thymidylate kinase (226 aa).

12-19 (GIDGAGKS) is a binding site for ATP.

Belongs to the thymidylate kinase family.

It carries out the reaction dTMP + ATP = dTDP + ADP. In terms of biological role, phosphorylation of dTMP to form dTDP in both de novo and salvage pathways of dTTP synthesis. This Verminephrobacter eiseniae (strain EF01-2) protein is Thymidylate kinase.